The sequence spans 1676 residues: DNA-directed RNA polymerase subunit beta'-beta'' (1676 aa).

The tract at residues 1 to 582 is DNA-directed RNA polymerase subunit beta'; the sequence is MCDAIQIRLA…FLKTTPGRII (582 aa). The Zn(2+) site is built by Cys-64, Cys-66, Cys-79, and Cys-82. Mg(2+) contacts are provided by Asp-454, Asp-456, and Asp-458. A DNA-directed RNA polymerase subunit beta'' region spans residues 583–1676; it reads FYQQAAYHVG…IPAGTGAKYL (1094 aa). Residues Cys-804, Cys-859, Cys-866, and Cys-869 each coordinate Zn(2+).

The protein in the N-terminal section; belongs to the RNA polymerase beta' chain family. RpoC1 subfamily. It in the C-terminal section; belongs to the RNA polymerase beta' chain family. RpoC2 subfamily. In terms of assembly, in plastids the minimal PEP RNA polymerase catalytic core is composed of four subunits: alpha, beta, beta', and beta''. When a (nuclear-encoded) sigma factor is associated with the core the holoenzyme is formed, which can initiate transcription. Beta' and beta'' are fused in this algae. It depends on Mg(2+) as a cofactor. The cofactor is Zn(2+).

The protein resides in the plastid. It localises to the chloroplast. The catalysed reaction is RNA(n) + a ribonucleoside 5'-triphosphate = RNA(n+1) + diphosphate. DNA-dependent RNA polymerase catalyzes the transcription of DNA into RNA using the four ribonucleoside triphosphates as substrates. The polypeptide is DNA-directed RNA polymerase subunit beta'-beta'' (Cyanidioschyzon merolae (strain NIES-3377 / 10D) (Unicellular red alga)).